The sequence spans 282 residues: Bifunctional protein FolD (282 aa).

Residues 165–167 (GAS) and Ile231 contribute to the NADP(+) site.

This sequence belongs to the tetrahydrofolate dehydrogenase/cyclohydrolase family. As to quaternary structure, homodimer.

It catalyses the reaction (6R)-5,10-methylene-5,6,7,8-tetrahydrofolate + NADP(+) = (6R)-5,10-methenyltetrahydrofolate + NADPH. The enzyme catalyses (6R)-5,10-methenyltetrahydrofolate + H2O = (6R)-10-formyltetrahydrofolate + H(+). It functions in the pathway one-carbon metabolism; tetrahydrofolate interconversion. In terms of biological role, catalyzes the oxidation of 5,10-methylenetetrahydrofolate to 5,10-methenyltetrahydrofolate and then the hydrolysis of 5,10-methenyltetrahydrofolate to 10-formyltetrahydrofolate. This chain is Bifunctional protein FolD, found in Francisella tularensis subsp. novicida (strain U112).